A 305-amino-acid polypeptide reads, in one-letter code: Beta-lactamase (305 aa).

Residues Met1–Ala34 constitute a signal peptide (tat-type signal). Ser82 acts as the Acyl-ester intermediate in catalysis. Lys250–Gly252 lines the substrate pocket.

The protein belongs to the class-A beta-lactamase family. In terms of processing, predicted to be exported by the Tat system. The position of the signal peptide cleavage has not been experimentally proven.

The enzyme catalyses a beta-lactam + H2O = a substituted beta-amino acid. The sequence is that of Beta-lactamase from Streptomyces lavendulae.